Here is a 235-residue protein sequence, read N- to C-terminus: Uridylate kinase (235 aa).

8–11 is a binding site for ATP; sequence KFSG. The involved in allosteric activation by GTP stretch occupies residues 16 to 21; sequence GKEGYG. G50 contributes to the UMP binding site. G51 and R55 together coordinate ATP. Residues D71 and 132 to 139 each bind UMP; that span reads TGNPYFTT. T159, Y165, and D168 together coordinate ATP.

Belongs to the UMP kinase family. Homohexamer.

Its subcellular location is the cytoplasm. The enzyme catalyses UMP + ATP = UDP + ADP. It functions in the pathway pyrimidine metabolism; CTP biosynthesis via de novo pathway; UDP from UMP (UMPK route): step 1/1. With respect to regulation, allosterically activated by GTP. Inhibited by UTP. In terms of biological role, catalyzes the reversible phosphorylation of UMP to UDP. This Sulfurovum sp. (strain NBC37-1) protein is Uridylate kinase.